The following is a 113-amino-acid chain: MHELWLCKRIVEIIKQQATGNKCRMVKKIVLEIGQLVAVDKHALNFSFKVITQGTIAQNAELSIVEIPGEAICNSCQQIVPMKQYYDECLVCGNHSLTLTKGEELKVKSMVVE.

Ni(2+) is bound at residue H2. Positions 73, 76, 89, and 92 each coordinate Zn(2+).

It belongs to the HypA/HybF family.

Its function is as follows. Involved in the maturation of [NiFe] hydrogenases. Required for nickel insertion into the metal center of the hydrogenase. The sequence is that of Hydrogenase maturation factor HypA from Legionella pneumophila (strain Paris).